The following is a 740-amino-acid chain: Eukaryotic translation initiation factor 3 subunit B (740 aa).

Over residues 1–10 the composition is skewed to polar residues; it reads MAPSFDTLSE. The tract at residues 1–20 is disordered; that stretch reads MAPSFDTLSEQDLHEEEEEE. Residues 40–126 enclose the RRM domain; that stretch reads TFVVIDGLPV…HTLLVNKLMD (87 aa). WD repeat units lie at residues 193 to 230, 232 to 289, 302 to 343, 455 to 496, 513 to 556, and 571 to 609; these read AHWTQLFVQWSPKGTYLASVHPQGVQLWGGPAFSKQKQ, PHPF…RSFV, EPKK…LLGK, SLKD…SFFA, IEKK…EKPE, and TEHYGVTDIDWDPTGRYVVSSASVWTHQLENGWNLHTFA. Positions 696–721 are disordered; sequence AYGLPEEADDPKLAKDAAATTQEQGE.

It belongs to the eIF-3 subunit B family. In terms of assembly, component of the eukaryotic translation initiation factor 3 (eIF-3) complex.

Its subcellular location is the cytoplasm. RNA-binding component of the eukaryotic translation initiation factor 3 (eIF-3) complex, which is involved in protein synthesis of a specialized repertoire of mRNAs and, together with other initiation factors, stimulates binding of mRNA and methionyl-tRNAi to the 40S ribosome. The eIF-3 complex specifically targets and initiates translation of a subset of mRNAs involved in cell proliferation. In Aspergillus fumigatus (strain ATCC MYA-4609 / CBS 101355 / FGSC A1100 / Af293) (Neosartorya fumigata), this protein is Eukaryotic translation initiation factor 3 subunit B (prt1).